The following is a 266-amino-acid chain: Putative transmembrane ascorbate-dependent reductase CYB561 homolog (266 aa).

Over 1–22 the chain is Cytoplasmic; sequence MSLLFDPGFVILREDQSVKLFN. The chain crosses the membrane as a helical span at residues 23–43; the sequence is IILVMSQVFGGLAVLLVTIWM. Positions 27 to 240 constitute a Cytochrome b561 domain; that stretch reads MSQVFGGLAV…YTVCVLLLVL (214 aa). Topologically, residues 44-61 are vesicular; sequence SKFESGFAWNEDPDKEFN. Residues 62–82 form a helical membrane-spanning segment; it reads YHPTFMIMGMVFLFGEALLVY. Heme b-binding residues include His-63, Arg-83, and Lys-90. Residues 83 to 95 lie on the Cytoplasmic side of the membrane; the sequence is RVFRNERKKFSKT. L-ascorbate-binding residues include Lys-90 and Lys-94. The chain crosses the membrane as a helical span at residues 96 to 116; sequence LHVILHSCVLVFMLMALKAVF. Residues His-97, 134-137, and His-139 contribute to the heme b site; that span reads NLVS. Residues 117–141 lie on the Vesicular side of the membrane; it reads DYHNLHKDPSGNPAPIVNLVSLHSW. The helical transmembrane segment at 142 to 162 threads the bilayer; that stretch reads IGLSVVILYFAQYIVGFITYF. Residues 163-176 are Cytoplasmic-facing; the sequence is FPGMPIPIRQLVMP. Arg-171 provides a ligand contact to L-ascorbate. The helical transmembrane segment at 177-197 threads the bilayer; the sequence is FHQMFGVLIFIFVSITVAMGI. Heme b contacts are provided by His-178 and Glu-199. The Vesicular portion of the chain corresponds to 198-219; that stretch reads SERAAWKHTCWTKEGQMCAQQA. A helical membrane pass occupies residues 220–240; the sequence is TSSFVGVFTFLYTVCVLLLVL. Residues 241 to 266 are Cytoplasmic-facing; it reads NPRWKRQSLPEEEGLHHLTSSHSMSD. Heme b is bound at residue Lys-245.

Heme b serves as cofactor.

Its subcellular location is the membrane. It catalyses the reaction monodehydro-L-ascorbate radical(out) + L-ascorbate(in) = monodehydro-L-ascorbate radical(in) + L-ascorbate(out). In terms of biological role, putative transmembrane reductase that uses ascorbate as an electron donor in the cytoplasm and transfers electrons across membranes to reduce monodehydro-L-ascorbate radical in the lumen of secretory vesicles. The polypeptide is Putative transmembrane ascorbate-dependent reductase CYB561 homolog (Caenorhabditis elegans).